Consider the following 234-residue polypeptide: Thymidylate kinase (234 aa).

Position 20–27 (20–27 (GIDASGKT)) interacts with ATP.

Belongs to the thymidylate kinase family.

It catalyses the reaction dTMP + ATP = dTDP + ADP. Functionally, phosphorylation of dTMP to form dTDP in both de novo and salvage pathways of dTTP synthesis. This chain is Thymidylate kinase, found in Mycoplasmopsis pulmonis (strain UAB CTIP) (Mycoplasma pulmonis).